We begin with the raw amino-acid sequence, 485 residues long: Retron Mx162 reverse transcriptase (485 aa).

Residues Met-1–Arg-33 form a disordered region. Residues Arg-167–Val-407 form the Reverse transcriptase domain. Residues Asp-250, Asp-346, and Asp-347 each coordinate Mg(2+).

It belongs to the bacterial reverse transcriptase family.

The catalysed reaction is DNA(n) + a 2'-deoxyribonucleoside 5'-triphosphate = DNA(n+1) + diphosphate. MsDNA synthesis is inhibited by rifampicin and chloramphenicol. Reverse transcriptase (RT) responsible for synthesis of msDNA-Mx162 (a branched molecule with RNA linked by a 2',5'-phosphodiester bond to ssDNA). The retron transcript serves as primer (from a conserved internal G residue) and template for the reaction, and codes for the RT. The retron is involved in antiviral defense. This is Retron Mx162 reverse transcriptase from Myxococcus xanthus.